A 318-amino-acid chain; its full sequence is Acetyl-coenzyme A carboxylase carboxyl transferase subunit alpha (318 aa).

Positions 39–293 constitute a CoA carboxyltransferase C-terminal domain; that stretch reads KLEKKVDKMR…HEALARHLKE (255 aa).

This sequence belongs to the AccA family. In terms of assembly, acetyl-CoA carboxylase is a heterohexamer composed of biotin carboxyl carrier protein (AccB), biotin carboxylase (AccC) and two subunits each of ACCase subunit alpha (AccA) and ACCase subunit beta (AccD).

It localises to the cytoplasm. It carries out the reaction N(6)-carboxybiotinyl-L-lysyl-[protein] + acetyl-CoA = N(6)-biotinyl-L-lysyl-[protein] + malonyl-CoA. It functions in the pathway lipid metabolism; malonyl-CoA biosynthesis; malonyl-CoA from acetyl-CoA: step 1/1. In terms of biological role, component of the acetyl coenzyme A carboxylase (ACC) complex. First, biotin carboxylase catalyzes the carboxylation of biotin on its carrier protein (BCCP) and then the CO(2) group is transferred by the carboxyltransferase to acetyl-CoA to form malonyl-CoA. The sequence is that of Acetyl-coenzyme A carboxylase carboxyl transferase subunit alpha from Geobacter metallireducens (strain ATCC 53774 / DSM 7210 / GS-15).